Here is a 1642-residue protein sequence, read N- to C-terminus: Cobra venom factor (1642 aa).

A signal peptide spans 1 to 22; sequence MERMALYLVAALLIGFPGSSHG. Asparagine 153, asparagine 158, and asparagine 209 each carry an N-linked (GlcNAc...) asparagine glycan. Residues proline 516, aspartate 539, valine 540, and aspartate 542 each coordinate Mg(2+). 12 cysteine pairs are disulfide-bonded: cysteine 544–cysteine 801, cysteine 609–cysteine 644, cysteine 677–cysteine 704, cysteine 678–cysteine 711, cysteine 691–cysteine 712, cysteine 857–cysteine 1492, cysteine 1340–cysteine 1468, cysteine 1368–cysteine 1437, cysteine 1485–cysteine 1490, cysteine 1497–cysteine 1569, cysteine 1516–cysteine 1640, and cysteine 1616–cysteine 1625. Positions 650–732 are excised as a propeptide; that stretch reads RRRRSSVLLL…QRESELFLAR (83 aa). The segment at 654–732 is C3a-like domain; sequence SSVLLLDSNA…QRESELFLAR (79 aa). Residues 677–712 enclose the Anaphylatoxin-like domain; the sequence is CCEDVMHENPMGYTCEKRAKYIQEGDACKAAFLECC. A factor B binding site region spans residues 736–747; that stretch reads EDGFIADSDIIS. The propeptide occupies 985–1263; that stretch reads HLIITPSGCG…VMAFQALAEY (279 aa). The interval 985–1263 is C3d-like domain; sequence HLIITPSGCG…VMAFQALAEY (279 aa). The isoglutamyl cysteine thioester (Cys-Gln) cross-link spans 993 to 996; it reads CGEQ. The tract at residues 1190 to 1253 is factor H binding site; it reads VLMAASTGRD…GETYGQTQAT (64 aa). N-linked (GlcNAc...) asparagine glycosylation is present at asparagine 1346. Residues 1497 to 1640 form the NTR domain; it reads CSSLNHQERI…FSYTLTEFGC (144 aa).

This sequence belongs to the venom complement C3 homolog family. In terms of assembly, heterotrimer of alpha, beta and gamma chains; disulfide-linked. Is active with factor B in the presence of factor D. Post-translationally, first processed by the removal of 4 Arg residues by furin-type protease, forming two chains, alpha and gamma/beta precursor, linked by a disulfide bond. Probably, the cobrin cleaves the C3a-like domain and then the C3d-like domain, generating the mature cobra venom factor (CVF). This mature CVF is composed of three chains: alpha, gamma and beta. In terms of processing, contains 3 N-linked oligosaccharide chains, two in the alpha-chain and one in the beta-chain. Glycosylation is not required for the biological activity. However, it contributes to the immunogenicity of CVF. The carbohydrate content is 7.4. The major oligosaccharide is a symmetric fucosylated biantennary complex-type chain with an unusual alpha-galactosylated Le(x) structure at its non-reducing end. In terms of tissue distribution, expressed by the venom gland.

The protein resides in the secreted. Complement-activating protein in cobra venom. It is a structural and functional analog of complement component C3b, the activated form of C3. It binds factor B (CFB), which is subsequently cleaved by factor D (CFD) to form the bimolecular complex CVF/Bb. CVF/Bb is a C3/C5 convertase that cleaves both complement components C3 and C5. Structurally, it resembles the C3b degradation product C3c, which is not able to form a C3/C5 convertase. Unlike C3b/Bb, CVF/Bb is a stable complex and completely resistant to the actions of complement regulatory factors H (CFH) and I (CFI). Therefore, CVF continuously activates complement resulting in the depletion of complement activity. The sequence is that of Cobra venom factor from Naja kaouthia (Monocled cobra).